A 231-amino-acid chain; its full sequence is Putative S-adenosylmethionine-dependent methyltransferase RcsF (231 aa).

Residues 5 to 142 enclose the TsaA-like domain; it reads VSPIGYIRSC…YVPYADAVAD (138 aa). S-adenosyl-L-methionine-binding positions include 22-24, 63-64, Arg91, and 122-125; these read PRQ, HQ, and LDGT.

This sequence belongs to the tRNA methyltransferase O family.

The polypeptide is Putative S-adenosylmethionine-dependent methyltransferase RcsF (rcsF) (Pseudomonas aeruginosa (strain ATCC 15692 / DSM 22644 / CIP 104116 / JCM 14847 / LMG 12228 / 1C / PRS 101 / PAO1)).